Consider the following 419-residue polypeptide: Histidine--tRNA ligase (419 aa).

Belongs to the class-II aminoacyl-tRNA synthetase family. Homodimer.

The protein resides in the cytoplasm. It catalyses the reaction tRNA(His) + L-histidine + ATP = L-histidyl-tRNA(His) + AMP + diphosphate + H(+). This chain is Histidine--tRNA ligase, found in Novosphingobium aromaticivorans (strain ATCC 700278 / DSM 12444 / CCUG 56034 / CIP 105152 / NBRC 16084 / F199).